Consider the following 150-residue polypeptide: Ribonuclease pancreatic delta-type (150 aa).

The first 25 residues, 1–25 (MGLEKSLILFSLLVLVLGWVQPSLG), serve as a signal peptide directing secretion. Residue arginine 35 coordinates substrate. Residue histidine 37 is the Proton acceptor of the active site. 4 cysteine pairs are disulfide-bonded: cysteine 51/cysteine 110, cysteine 65/cysteine 121, cysteine 83/cysteine 136, and cysteine 90/cysteine 98. Residues 66–70 (KRVNT), lysine 91, and arginine 111 each bind substrate. Histidine 145 acts as the Proton donor in catalysis.

The protein belongs to the pancreatic ribonuclease family. In terms of assembly, monomer.

The protein localises to the secreted. It carries out the reaction an [RNA] containing cytidine + H2O = an [RNA]-3'-cytidine-3'-phosphate + a 5'-hydroxy-ribonucleotide-3'-[RNA].. It catalyses the reaction an [RNA] containing uridine + H2O = an [RNA]-3'-uridine-3'-phosphate + a 5'-hydroxy-ribonucleotide-3'-[RNA].. Functionally, endonuclease that catalyzes the cleavage of RNA on the 3' side of pyrimidine nucleotides. Acts on single-stranded and double-stranded RNA. In Rattus exulans (Polynesian rat), this protein is Ribonuclease pancreatic delta-type.